The following is a 472-amino-acid chain: Protein c-ets-2-A (472 aa).

Positions 85-170 constitute a PNT domain; sequence NTFNGFAKKR…EHLEEMMKEH (86 aa). Positions 366-446 form a DNA-binding region, ETS; it reads IQLWQFLLEL…SGKRYVYRFV (81 aa).

It belongs to the ETS family.

The protein localises to the nucleus. Functionally, probable transcription factor. The protein is Protein c-ets-2-A (ets2-a) of Xenopus laevis (African clawed frog).